We begin with the raw amino-acid sequence, 66 residues long: MKTSVLFVIFGLALLFCLSFADELEDTGRQCGEFMWKCGAGKPTCCSGYDCSPTWKWCVLKSPGRR.

The signal sequence occupies residues 1-21 (MKTSVLFVIFGLALLFCLSFA). Residues 22–29 (DELEDTGR) constitute a propeptide that is removed on maturation. 3 disulfides stabilise this stretch: Cys31–Cys46, Cys38–Cys51, and Cys45–Cys58.

It belongs to the neurotoxin 10 (Hwtx-1) family. 29 (Jztx-13) subfamily. In terms of tissue distribution, expressed by the venom gland.

Its subcellular location is the secreted. Its function is as follows. Probable ion channel inhibitor. The protein is U10-theraphotoxin-Cg1a 3 of Chilobrachys guangxiensis (Chinese earth tiger tarantula).